The sequence spans 160 residues: Major pollen allergen Bet v 1-C (160 aa).

Brassinolide contacts are provided by lysine 55, tyrosine 82, tyrosine 84, and asparagine 101.

The protein belongs to the BetVI family.

The protein localises to the cytoplasm. May be a general steroid carrier protein. In Betula pendula (European white birch), this protein is Major pollen allergen Bet v 1-C (BETV1C).